We begin with the raw amino-acid sequence, 225 residues long: Thymidylate kinase (225 aa).

9–16 serves as a coordination point for ATP; sequence GIEGCGKT.

This sequence belongs to the thymidylate kinase family.

The catalysed reaction is dTMP + ATP = dTDP + ADP. Its function is as follows. Phosphorylation of dTMP to form dTDP in both de novo and salvage pathways of dTTP synthesis. The chain is Thymidylate kinase from Geobacter sp. (strain M21).